The following is a 216-amino-acid chain: uncharacterized protein (216 aa).

Residues 55–216 form a disordered region; sequence NEDKAEAMSN…NEKEKDVNPK (162 aa). Composition is skewed to basic and acidic residues over residues 134 to 152, 177 to 187, and 207 to 216; these read LTEKPLTDTEPELHPDNHV, KINDKSDDTLH, and NEKEKDVNPK.

This is an uncharacterized protein from Caenorhabditis elegans.